Here is a 202-residue protein sequence, read N- to C-terminus: Potassium-transporting ATPase KdpC subunit 1 (202 aa).

A helical membrane pass occupies residues 17-37 (LWVIAAVIYPFFMIAVGQIVF).

Belongs to the KdpC family. The system is composed of three essential subunits: KdpA, KdpB and KdpC.

The protein resides in the cell inner membrane. Part of the high-affinity ATP-driven potassium transport (or Kdp) system, which catalyzes the hydrolysis of ATP coupled with the electrogenic transport of potassium into the cytoplasm. This subunit acts as a catalytic chaperone that increases the ATP-binding affinity of the ATP-hydrolyzing subunit KdpB by the formation of a transient KdpB/KdpC/ATP ternary complex. This Nostoc sp. (strain PCC 7120 / SAG 25.82 / UTEX 2576) protein is Potassium-transporting ATPase KdpC subunit 1.